Here is a 589-residue protein sequence, read N- to C-terminus: Pentalenolactone D synthase (589 aa).

Residues 60-61, 82-83, 90-91, 102-103, Tyr108, Val152, and Met491 contribute to the FAD site; these read IG, DE, TW, and DV.

Belongs to the FAD-binding monooxygenase family. FAD serves as cofactor.

The enzyme catalyses 1-deoxy-11-oxopentalenate + NADPH + O2 + H(+) = pentalenolactone D + NADP(+) + H2O. The protein operates within antibiotic biosynthesis; pentalenolactone biosynthesis. In terms of biological role, catalyzes the flavin-dependent Baeyer-Villiger oxidation of 1-deoxy-11-oxopentalenic acid to pentalenolactone D in the biosynthesis of pentalenolactone antibiotic. The protein is Pentalenolactone D synthase (pntE) of Streptomyces arenae.